A 74-amino-acid chain; its full sequence is MLEGAKLMGAGAATIALAGAAIGIGNVFSSLIHSVARNPSLAKQLFGYAILGFALTEAIALFALMMAFLISFVF.

The next 2 helical transmembrane spans lie at 8–28 (MGAG…GNVF) and 50–70 (ILGF…AFLI).

Belongs to the ATPase C chain family. In terms of assembly, F-type ATPases have 2 components, CF(1) - the catalytic core - and CF(0) - the membrane proton channel. CF(1) has five subunits: alpha(3), beta(3), gamma(1), delta(1), epsilon(1). CF(0) has three main subunits: a, b and c.

It localises to the mitochondrion membrane. This protein is one of the chains of the nonenzymatic membrane component (F0) of mitochondrial ATPase. This Solanum lycopersicum (Tomato) protein is ATP synthase subunit 9, mitochondrial (ATP9).